The following is a 133-amino-acid chain: Ribosome-binding factor A (133 aa).

This sequence belongs to the RbfA family. As to quaternary structure, monomer. Binds 30S ribosomal subunits, but not 50S ribosomal subunits or 70S ribosomes.

The protein resides in the cytoplasm. Functionally, one of several proteins that assist in the late maturation steps of the functional core of the 30S ribosomal subunit. Associates with free 30S ribosomal subunits (but not with 30S subunits that are part of 70S ribosomes or polysomes). Required for efficient processing of 16S rRNA. May interact with the 5'-terminal helix region of 16S rRNA. The polypeptide is Ribosome-binding factor A (Bordetella pertussis (strain Tohama I / ATCC BAA-589 / NCTC 13251)).